Reading from the N-terminus, the 512-residue chain is Cytochrome P450 4d1 (512 aa).

Heme-binding residues include Glu316 and Cys456.

It belongs to the cytochrome P450 family. Heme is required as a cofactor.

The protein localises to the endoplasmic reticulum membrane. The protein resides in the microsome membrane. Involved in the metabolism of insect hormones and in the breakdown of synthetic insecticides. This Drosophila melanogaster (Fruit fly) protein is Cytochrome P450 4d1 (Cyp4d1).